A 169-amino-acid polypeptide reads, in one-letter code: Peptide deformylase (169 aa).

Fe cation-binding residues include cysteine 94 and histidine 136. The active site involves glutamate 137. Histidine 140 serves as a coordination point for Fe cation.

It belongs to the polypeptide deformylase family. Fe(2+) is required as a cofactor.

The enzyme catalyses N-terminal N-formyl-L-methionyl-[peptide] + H2O = N-terminal L-methionyl-[peptide] + formate. Removes the formyl group from the N-terminal Met of newly synthesized proteins. Requires at least a dipeptide for an efficient rate of reaction. N-terminal L-methionine is a prerequisite for activity but the enzyme has broad specificity at other positions. The polypeptide is Peptide deformylase (Desulfotalea psychrophila (strain LSv54 / DSM 12343)).